Reading from the N-terminus, the 359-residue chain is 3-dehydroquinate synthase (359 aa).

Residues 71–76, 105–109, 129–130, Lys-142, Lys-151, and 169–172 each bind NAD(+); these read DGEQFK, GVIGD, TT, and CLQT. Zn(2+) contacts are provided by Glu-184, His-247, and His-264.

The protein belongs to the sugar phosphate cyclases superfamily. Dehydroquinate synthase family. Requires NAD(+) as cofactor. Co(2+) is required as a cofactor. The cofactor is Zn(2+).

It is found in the cytoplasm. The enzyme catalyses 7-phospho-2-dehydro-3-deoxy-D-arabino-heptonate = 3-dehydroquinate + phosphate. It functions in the pathway metabolic intermediate biosynthesis; chorismate biosynthesis; chorismate from D-erythrose 4-phosphate and phosphoenolpyruvate: step 2/7. In terms of biological role, catalyzes the conversion of 3-deoxy-D-arabino-heptulosonate 7-phosphate (DAHP) to dehydroquinate (DHQ). In Shewanella oneidensis (strain ATCC 700550 / JCM 31522 / CIP 106686 / LMG 19005 / NCIMB 14063 / MR-1), this protein is 3-dehydroquinate synthase.